Here is an 89-residue protein sequence, read N- to C-terminus: MSLASAETAKIVKEYQLGKDDTGSPEVQVAILTAKIIKLTDHMKAHKHDHHSRRGLLRMVSQRRKLLNFLKRNDLQRYLKLIERLGLRS.

It belongs to the universal ribosomal protein uS15 family. In terms of assembly, part of the 30S ribosomal subunit. Forms a bridge to the 50S subunit in the 70S ribosome, contacting the 23S rRNA.

In terms of biological role, one of the primary rRNA binding proteins, it binds directly to 16S rRNA where it helps nucleate assembly of the platform of the 30S subunit by binding and bridging several RNA helices of the 16S rRNA. Forms an intersubunit bridge (bridge B4) with the 23S rRNA of the 50S subunit in the ribosome. This Coxiella burnetii (strain CbuK_Q154) (Coxiella burnetii (strain Q154)) protein is Small ribosomal subunit protein uS15.